The following is a 449-amino-acid chain: Probable glycine dehydrogenase (decarboxylating) subunit 1 (449 aa).

It belongs to the GcvP family. N-terminal subunit subfamily. As to quaternary structure, the glycine cleavage system is composed of four proteins: P, T, L and H. In this organism, the P 'protein' is a heterodimer of two subunits.

It catalyses the reaction N(6)-[(R)-lipoyl]-L-lysyl-[glycine-cleavage complex H protein] + glycine + H(+) = N(6)-[(R)-S(8)-aminomethyldihydrolipoyl]-L-lysyl-[glycine-cleavage complex H protein] + CO2. Functionally, the glycine cleavage system catalyzes the degradation of glycine. The P protein binds the alpha-amino group of glycine through its pyridoxal phosphate cofactor; CO(2) is released and the remaining methylamine moiety is then transferred to the lipoamide cofactor of the H protein. In Oceanobacillus iheyensis (strain DSM 14371 / CIP 107618 / JCM 11309 / KCTC 3954 / HTE831), this protein is Probable glycine dehydrogenase (decarboxylating) subunit 1.